Here is a 133-residue protein sequence, read N- to C-terminus: Protein NrdI (133 aa).

The protein belongs to the NrdI family.

Its function is as follows. Probably involved in ribonucleotide reductase function. This chain is Protein NrdI, found in Cronobacter sakazakii (strain ATCC BAA-894) (Enterobacter sakazakii).